The primary structure comprises 209 residues: Thymidylate kinase (209 aa).

11 to 18 (GIEGAGKT) is an ATP binding site.

Belongs to the thymidylate kinase family.

The catalysed reaction is dTMP + ATP = dTDP + ADP. Phosphorylation of dTMP to form dTDP in both de novo and salvage pathways of dTTP synthesis. The sequence is that of Thymidylate kinase (tmk) from Pasteurella multocida (strain Pm70).